We begin with the raw amino-acid sequence, 520 residues long: ATP-dependent RNA helicase CshA (520 aa).

The Q motif signature appears at 2 to 30 (TKFSEFGLDEKIVKSVNRMGFEEATPIQE). Residues 33 to 203 (IPLGLEGKDL…ERFMHSPELI (171 aa)) form the Helicase ATP-binding domain. Residue 46–53 (AQTGTGKT) coordinates ATP. Positions 151-154 (DEAD) match the DEAD box motif. Positions 214–374 (LIEQFFVKVH…PLQAPTWDEA (161 aa)) constitute a Helicase C-terminal domain. The segment covering 428 to 439 (KTPVHITEERPL) has biased composition (basic and acidic residues). Positions 428–520 (KTPVHITEER…NKGNYSQKSK (93 aa)) are disordered. Gly residues-rich tracts occupy residues 442–468 (RGGGGYKGKNGKGGKGGGYRGGSGKGG) and 482–496 (SGGGSGGGSGSGGGG).

Belongs to the DEAD box helicase family. CshA subfamily. As to quaternary structure, oligomerizes, may be a member of the RNA degradosome.

The protein localises to the cytoplasm. The enzyme catalyses ATP + H2O = ADP + phosphate + H(+). In terms of biological role, DEAD-box RNA helicase possibly involved in RNA degradation. Unwinds dsRNA in both 5'- and 3'-directions, has RNA-dependent ATPase activity. Involved in cold tolerance, motility and alcohol tolerance. The chain is ATP-dependent RNA helicase CshA from Listeria monocytogenes serovar 1/2a (strain ATCC BAA-679 / EGD-e).